The sequence spans 411 residues: Arginine deiminase (411 aa).

Cys401 serves as the catalytic Amidino-cysteine intermediate.

It belongs to the arginine deiminase family.

It is found in the cytoplasm. It catalyses the reaction L-arginine + H2O = L-citrulline + NH4(+). Its pathway is amino-acid degradation; L-arginine degradation via ADI pathway; carbamoyl phosphate from L-arginine: step 1/2. This is Arginine deiminase from Streptococcus equi subsp. zooepidemicus (strain MGCS10565).